Consider the following 573-residue polypeptide: Phosphoenolpyruvate-protein phosphotransferase (573 aa).

The active-site Tele-phosphohistidine intermediate is histidine 190. Phosphoenolpyruvate-binding residues include arginine 297 and arginine 334. The Mg(2+) site is built by glutamate 433 and aspartate 457. Phosphoenolpyruvate contacts are provided by residues 456 to 457 (ND) and arginine 467. The active-site Proton donor is cysteine 504.

Belongs to the PEP-utilizing enzyme family. As to quaternary structure, homodimer. The cofactor is Mg(2+).

The protein resides in the cytoplasm. It carries out the reaction L-histidyl-[protein] + phosphoenolpyruvate = N(pros)-phospho-L-histidyl-[protein] + pyruvate. Its function is as follows. General (non sugar-specific) component of the phosphoenolpyruvate-dependent sugar phosphotransferase system (sugar PTS). This major carbohydrate active-transport system catalyzes the phosphorylation of incoming sugar substrates concomitantly with their translocation across the cell membrane. Enzyme I transfers the phosphoryl group from phosphoenolpyruvate (PEP) to the phosphoryl carrier protein (HPr). The chain is Phosphoenolpyruvate-protein phosphotransferase (ptsI) from Borreliella burgdorferi (strain ATCC 35210 / DSM 4680 / CIP 102532 / B31) (Borrelia burgdorferi).